The chain runs to 195 residues: Small ribosomal subunit protein bS16 (195 aa).

The span at 171 to 181 shows a compositional bias: low complexity; it reads PEAPVAAAEPA. Residues 171–195 are disordered; sequence PEAPVAAAEPAPEVKAEEKEEGGEA.

It belongs to the bacterial ribosomal protein bS16 family.

This chain is Small ribosomal subunit protein bS16, found in Chlorobium luteolum (strain DSM 273 / BCRC 81028 / 2530) (Pelodictyon luteolum).